We begin with the raw amino-acid sequence, 425 residues long: SWI/SNF and RSC complexes subunit ssr3 (425 aa).

The segment covering 1–16 has biased composition (polar residues); the sequence is MSNNSRLPENGVQSGN. The disordered stretch occupies residues 1–23; the sequence is MSNNSRLPENGVQSGNGEDAELK. The SWIB/MDM2 domain occupies 201–278; it reads EHPERYKLSK…PELMNRFLEP (78 aa).

Belongs to the SMARCD family. Component of the RSC complex composed of at least arp9, arp42, rsc1, rsc4, rsc7, rsc9, rsc58, sfh1, snf21, ssr1, ssr2, ssr3 and ssr4. The complex interacts with histone and histone variant components of centromeric chromatin. Component of the SWI/SNF global transcription activator complex composed of at least arp9, arp42, snf5, snf22, snf30, sbf59, sol1, ssr1, ssr2, ssr3, ssr4 and tfg3.

It is found in the cytoplasm. The protein localises to the nucleus. Functionally, component of the chromatin structure remodeling complex (RSC), which is involved in transcription regulation and nucleosome positioning. Controls particularly membrane and organelle development genes. Part of the SWI/SNF complex, an ATP-dependent chromatin remodeling complex, required for the positive and negative regulation of gene expression of a large number of genes. It changes chromatin structure by altering DNA-histone contacts within a nucleosome, leading eventually to a change in nucleosome position, thus facilitating or repressing binding of gene-specific transcription factors. This is SWI/SNF and RSC complexes subunit ssr3 (ssr3) from Schizosaccharomyces pombe (strain 972 / ATCC 24843) (Fission yeast).